Reading from the N-terminus, the 206-residue chain is Small ribosomal subunit protein uS4A (206 aa).

Positions 98-164 constitute an S4 RNA-binding domain; that stretch reads MRLDNVVYKL…EKFKTFAENP (67 aa).

It belongs to the universal ribosomal protein uS4 family. In terms of assembly, part of the 30S ribosomal subunit. Contacts protein S5. The interaction surface between S4 and S5 is involved in control of translational fidelity.

Its function is as follows. One of the primary rRNA binding proteins, it binds directly to 16S rRNA where it nucleates assembly of the body of the 30S subunit. Functionally, with S5 and S12 plays an important role in translational accuracy. This is Small ribosomal subunit protein uS4A from Clostridium novyi (strain NT).